The primary structure comprises 698 residues: Zinc finger CCCH domain-containing protein 7 (698 aa).

Positions 1 to 11 (MEEPSPVPPAA) are enriched in pro residues. Disordered regions lie at residues 1-23 (MEEP…PPTT), 56-95 (HAAR…GGDR), 109-137 (APHE…PQGT), and 272-300 (GSLD…SGNS). Composition is skewed to low complexity over residues 12–21 (APASLAAAPP) and 65–74 (EPAAAAAIPP). The segment covering 281-300 (EEGEIEGDTQNLDADDSGNS) has biased composition (acidic residues). C3H1-type zinc fingers lie at residues 429 to 456 (PKVV…HDTT), 458 to 485 (LTKS…HELS), and 486 to 511 (KYPC…HVIP). Disordered regions lie at residues 512–553 (TAEG…GEPA) and 607–682 (TEKH…QHEV). 2 stretches are compositionally biased toward polar residues: residues 535–548 (CQEQ…STVY) and 665–680 (SLPT…STQH).

The protein is Zinc finger CCCH domain-containing protein 7 of Oryza sativa subsp. japonica (Rice).